Here is a 501-residue protein sequence, read N- to C-terminus: ATP synthase subunit beta (501 aa).

153 to 160 (GGAGVGKT) is a binding site for ATP.

It belongs to the ATPase alpha/beta chains family. F-type ATPases have 2 components, CF(1) - the catalytic core - and CF(0) - the membrane proton channel. CF(1) has five subunits: alpha(3), beta(3), gamma(1), delta(1), epsilon(1). CF(0) has three main subunits: a(1), b(2) and c(9-12). The alpha and beta chains form an alternating ring which encloses part of the gamma chain. CF(1) is attached to CF(0) by a central stalk formed by the gamma and epsilon chains, while a peripheral stalk is formed by the delta and b chains.

It is found in the cell inner membrane. It catalyses the reaction ATP + H2O + 4 H(+)(in) = ADP + phosphate + 5 H(+)(out). In terms of biological role, produces ATP from ADP in the presence of a proton gradient across the membrane. The catalytic sites are hosted primarily by the beta subunits. This chain is ATP synthase subunit beta, found in Cytophaga hutchinsonii (strain ATCC 33406 / DSM 1761 / CIP 103989 / NBRC 15051 / NCIMB 9469 / D465).